Here is a 21-residue protein sequence, read N- to C-terminus: Granule-bound starch synthase 1 (21 aa).

The protein belongs to the glycosyltransferase 1 family. Bacterial/plant glycogen synthase subfamily.

Its subcellular location is the plastid. The protein localises to the chloroplast. It localises to the amyloplast. It catalyses the reaction an NDP-alpha-D-glucose + [(1-&gt;4)-alpha-D-glucosyl](n) = [(1-&gt;4)-alpha-D-glucosyl](n+1) + a ribonucleoside 5'-diphosphate + H(+). It participates in glycan biosynthesis; starch biosynthesis. In Secale cereale (Rye), this protein is Granule-bound starch synthase 1.